Here is a 307-residue protein sequence, read N- to C-terminus: uncharacterized protein (307 aa).

This is an uncharacterized protein from Sinorhizobium fredii (strain NBRC 101917 / NGR234).